The following is a 103-amino-acid chain: SOSS complex subunit C (103 aa).

It belongs to the SOSS-C family. As to quaternary structure, belongs to the multiprotein complex Integrator. Component of the SOSS complex, composed of SOSS-B (SOSS-B1/NABP2 or SOSS-B2/NABP1), SOSS-A/INTS3 and SOSS-C/INIP.

It is found in the nucleus. In terms of biological role, component of the SOSS complex, a multiprotein complex that functions downstream of the MRN complex to promote DNA repair and G2/M checkpoint. The SOSS complex associates with single-stranded DNA at DNA lesions and influences diverse endpoints in the cellular DNA damage response including cell-cycle checkpoint activation, recombinational repair and maintenance of genomic stability. Required for efficient homologous recombination-dependent repair of double-strand breaks (DSBs). This is SOSS complex subunit C (INIP) from Gallus gallus (Chicken).